Here is a 468-residue protein sequence, read N- to C-terminus: Glutamate--tRNA ligase 2 (468 aa).

Positions 9–19 match the 'HIGH' region motif; that stretch reads PSPTGHLHIGG. Cys-98, Cys-100, Cys-125, and His-127 together coordinate Zn(2+). The 'KMSKS' region motif lies at 236–240; it reads RLSKR. Lys-239 is an ATP binding site.

It belongs to the class-I aminoacyl-tRNA synthetase family. Glutamate--tRNA ligase type 1 subfamily. As to quaternary structure, monomer. Requires Zn(2+) as cofactor.

The protein resides in the cytoplasm. The enzyme catalyses tRNA(Glu) + L-glutamate + ATP = L-glutamyl-tRNA(Glu) + AMP + diphosphate. Functionally, catalyzes the attachment of glutamate to tRNA(Glu) in a two-step reaction: glutamate is first activated by ATP to form Glu-AMP and then transferred to the acceptor end of tRNA(Glu). The sequence is that of Glutamate--tRNA ligase 2 from Methylococcus capsulatus (strain ATCC 33009 / NCIMB 11132 / Bath).